A 614-amino-acid chain; its full sequence is Translation initiation factor IF-2 (614 aa).

Residues 115-283 (ARAPIVTIMG…ILLIAELNNY (169 aa)) form the tr-type G domain. A G1 region spans residues 124-131 (GHVDHGKT). Position 124–131 (124–131 (GHVDHGKT)) interacts with GTP. The G2 stretch occupies residues 149–153 (GITQH). Residues 170–173 (DTPG) form a G3 region. GTP contacts are provided by residues 170 to 174 (DTPGH) and 224 to 227 (NKMD). Residues 224 to 227 (NKMD) are G4. The tract at residues 260–262 (SAL) is G5.

It belongs to the TRAFAC class translation factor GTPase superfamily. Classic translation factor GTPase family. IF-2 subfamily.

Its subcellular location is the cytoplasm. Functionally, one of the essential components for the initiation of protein synthesis. Protects formylmethionyl-tRNA from spontaneous hydrolysis and promotes its binding to the 30S ribosomal subunits. Also involved in the hydrolysis of GTP during the formation of the 70S ribosomal complex. This is Translation initiation factor IF-2 from Ureaplasma parvum serovar 3 (strain ATCC 27815 / 27 / NCTC 11736).